A 199-amino-acid polypeptide reads, in one-letter code: Probable nicotinate-nucleotide adenylyltransferase (199 aa).

The protein belongs to the NadD family.

The catalysed reaction is nicotinate beta-D-ribonucleotide + ATP + H(+) = deamido-NAD(+) + diphosphate. It functions in the pathway cofactor biosynthesis; NAD(+) biosynthesis; deamido-NAD(+) from nicotinate D-ribonucleotide: step 1/1. Catalyzes the reversible adenylation of nicotinate mononucleotide (NaMN) to nicotinic acid adenine dinucleotide (NaAD). This chain is Probable nicotinate-nucleotide adenylyltransferase, found in Roseiflexus sp. (strain RS-1).